The primary structure comprises 379 residues: Cobalt-precorrin-5B C(1)-methyltransferase (379 aa).

Belongs to the CbiD family.

The catalysed reaction is Co-precorrin-5B + S-adenosyl-L-methionine = Co-precorrin-6A + S-adenosyl-L-homocysteine. The protein operates within cofactor biosynthesis; adenosylcobalamin biosynthesis; cob(II)yrinate a,c-diamide from sirohydrochlorin (anaerobic route): step 6/10. Functionally, catalyzes the methylation of C-1 in cobalt-precorrin-5B to form cobalt-precorrin-6A. The protein is Cobalt-precorrin-5B C(1)-methyltransferase of Edwardsiella ictaluri (strain 93-146).